The sequence spans 292 residues: AKT-interacting protein (292 aa).

The tract at residues 1-64 (MNPFWNMSSA…ISPSPSVQPT (64 aa)) is disordered. Residues 14-23 (KRSDNDEKIA) show a composition bias toward basic and acidic residues. A UBC core domain is found at 75–223 (YLEYSLLAEF…VVDSVKLCNS (149 aa)). A disordered region spans residues 273–292 (SWVKPGSVLPFSKEENSLQT).

Belongs to the ubiquitin-conjugating enzyme family. FTS subfamily.

It is found in the cytoplasm. Its subcellular location is the cell membrane. Functionally, may function to promote vesicle trafficking and/or fusion. May also regulate apoptosis. In Xenopus tropicalis (Western clawed frog), this protein is AKT-interacting protein (aktip).